The sequence spans 1761 residues: 6-methylsalicylic acid synthase AOL_s00215g283 (1761 aa).

Residues 18–443 enclose the Ketosynthase family 3 (KS3) domain; it reads QDDIAIIGMA…GTVAHAVIEQ (426 aa). Residues cysteine 190, histidine 325, and histidine 367 each act as for beta-ketoacyl synthase activity in the active site. The segment at 554-870 is malonyl-CoA:ACP transacylase (MAT) domain; sequence VWVFSGHGAH…ALGKLHCHGA (317 aa). Serine 641 acts as the For malonyltransferase activity in catalysis. The segment at 918–1038 is N-terminal hotdog fold; that stretch reads HVLLGAKHQV…GHVANNEWSK (121 aa). Residues 918-1187 are dehydratase (DH) domain; that stretch reads HVLLGAKHQV…NGMRFSAVEG (270 aa). A PKS/mFAS DH domain is found at 918–1191; it reads HVLLGAKHQV…FSAVEGTPGA (274 aa). The Proton acceptor; for dehydratase activity role is filled by histidine 950. A C-terminal hotdog fold region spans residues 1050–1191; it reads LPSVKPSFAT…FSAVEGTPGA (142 aa). The active-site Proton donor; for dehydratase activity is aspartate 1113. The interval 1399–1587 is ketoreductase (KR) domain; that stretch reads GTYLITGGLG…IVSFLWTSWN (189 aa). The segment at 1654-1680 is disordered; that stretch reads PRKRAESSGTEAVSKGEVSEKAPVPKS. Residues 1686 to 1761 form the Carrier domain; sequence EYLQNAISEC…HLVKWFEEKI (76 aa). Serine 1721 is modified (O-(pantetheine 4'-phosphoryl)serine).

It carries out the reaction 3 malonyl-CoA + acetyl-CoA + NADPH + 3 H(+) = 6-methylsalicylate + 3 CO2 + NADP(+) + 4 CoA + H2O. The protein operates within secondary metabolite biosynthesis; terpenoid biosynthesis. 6-methylsalicylic acid synthase; part of the gene cluster that mediates the biosynthesis of sesquiterpenyl epoxy-cyclohexenoids (SECs) such as anthrobotrisins and arthrosporols, metabolites that possess a novel hybrid carbon skeleton consisting of a polyketide-derived epoxycyclohexenol combined with a terpenoid-derived monocyclic sesquiterpenol substructure (PKS-PTS hybrid). The SEC pathway plays an important role for fungal soil colonization via decreasing fungal nematode-capturing ability. Within the pathway, the polyketide synthase (PKS) AOL_s00215g283 catalyzes the biosynthesis of 6-methylsalicylic acid (6-MSA) via condensation of 1 acetate and 3 malonate units. AOL_s00215g283 performs a series of programmed reactions including Claisen condensation, dehydration, reduction, and cyclization to yield 6-MSA. The pathway begins with the biosynthesis of 6-methylsalicylic acid (6-MSA), the first precursor of the polyketide-derived epoxycyclohexenol in arthrosporols, by the polyketide synthase (PKS) AOL_s00215g283. The 6-methylsalicylic acid decarboxylase AOL_s00215g281 then catalyzes the decarboxylation of 6-methylsalicylic acid to yield m-cresol. The cytochrome P450 monooxygenase AOL_s00215g282 further oxidizes m-cresol to yield toluquinol. With the assistance of the oxidoreductase AOL_s00215g277, the polyprenyl transferase AOL_s00215g276 catalyzes the farnesylation of toluquinol to produce farnesyl hydroquinone, the hybrid precursor for biosynthesis of SECs. Farnesyl hydroquinone undergoes epoxidation and then subsequent dehydrogenation to form farnesyl epoxy-quinone, the first and simplest SEC. The cytochrome P450 monooxygenase AOL_s00215g278 and the FAD-dependent monooxygenase AOL_s00215g279 might be involved in the oxygenation of the phenol moiety, most likely in the epoxy formation. The cytochrome P450 monooxygenases AOL_s00215g274 and AOL_s00215g280 are involved in specific regional ketone reductions at respectively C-4 and C-1 of farnesyl epoxy-quinone PubMed:33823587. The chain is 6-methylsalicylic acid synthase AOL_s00215g283 from Arthrobotrys oligospora (strain ATCC 24927 / CBS 115.81 / DSM 1491) (Nematode-trapping fungus).